A 235-amino-acid chain; its full sequence is Ribonuclease PH (235 aa).

Phosphate is bound by residues R86 and G124–R126.

The protein belongs to the RNase PH family. As to quaternary structure, homohexameric ring arranged as a trimer of dimers.

The catalysed reaction is tRNA(n+1) + phosphate = tRNA(n) + a ribonucleoside 5'-diphosphate. In terms of biological role, phosphorolytic 3'-5' exoribonuclease that plays an important role in tRNA 3'-end maturation. Removes nucleotide residues following the 3'-CCA terminus of tRNAs; can also add nucleotides to the ends of RNA molecules by using nucleoside diphosphates as substrates, but this may not be physiologically important. Probably plays a role in initiation of 16S rRNA degradation (leading to ribosome degradation) during starvation. The sequence is that of Ribonuclease PH from Legionella pneumophila (strain Corby).